A 108-amino-acid polypeptide reads, in one-letter code: Sperm-egg fusion protein LLCFC1 (108 aa).

The signal sequence occupies residues 1–30 (MTSLGSQLHRATFLTALLLLLLLQVKGVKT). A compositionally biased stretch (basic and acidic residues) spans 39–49 (GDKSQKDKVSS). Positions 39–64 (GDKSQKDKVSSEDQGEEEYEEHFEAS) are disordered.

In terms of tissue distribution, detected in testicular germ cells and spermatozoa (at protein level). Abundantly expressed in testis.

The protein resides in the secreted. In terms of biological role, sperm protein required for fusion of sperm with the egg membrane during fertilization. The sequence is that of Sperm-egg fusion protein LLCFC1 from Mus musculus (Mouse).